A 1249-amino-acid chain; its full sequence is Fanconi anemia group J protein (1249 aa).

One can recognise a Helicase ATP-binding domain in the interval 11-442; that stretch reads GGVKIYFPYK…KDHEPLRAVC (432 aa). The span at 102 to 127 shows a compositional bias: polar residues; that stretch reads QGTSRHFNYPSTPPSERNGTSSTCQD. A disordered region spans residues 102-131; sequence QGTSRHFNYPSTPPSERNGTSSTCQDSPEK. The Nuclear localization signal motif lies at 158-175; sequence KKRIRPLETTQQIRKRHC. Residue 185–192 participates in ATP binding; sequence AKVDSGKT. [4Fe-4S] cluster contacts are provided by Cys283, Cys298, Cys310, and Cys350. Residues 393–396 carry the DEAH box motif; sequence DEAH. Ser505, Ser927, Ser930, Ser956, Ser990, Ser1004, and Ser1032 each carry phosphoserine. The interval 888–1063 is interaction with BRCA1; that stretch reads HQKVLNVSIK…ESSNLTVNTS (176 aa). Disordered stretches follow at residues 1018–1042 and 1108–1127; these read KATP…EKME and VSEE…EAED. Over residues 1023-1032 the composition is skewed to polar residues; it reads LGSSENSASS. Positions 1110 to 1122 are enriched in basic and acidic residues; the sequence is EEDKQSTSNRDFE. Residue Ser1237 is modified to Phosphoserine. Lys1249 carries the post-translational modification N6-acetyllysine.

This sequence belongs to the DEAD box helicase family. DEAH subfamily. As to quaternary structure, interacts with the replication protein A complex (RPA) via the RPA1 subunit; following DNA damage they colocalize in foci in the nucleus. Binds directly to the BRCT domains of BRCA1. Interacts with the CIA complex components CIAO1, CIAO2B and MMS19. The cofactor is [4Fe-4S] cluster. Post-translationally, phosphorylated. Phosphorylation is necessary for interaction with BRCA1, and is cell-cycle regulated. Acetylation at Lys-1249 facilitates DNA end processing required for repair and checkpoint signaling. In terms of tissue distribution, ubiquitously expressed, with highest levels in testis.

It localises to the nucleus. It is found in the cytoplasm. It carries out the reaction Couples ATP hydrolysis with the unwinding of duplex DNA at the replication fork by translocating in the 5'-3' direction. This creates two antiparallel DNA single strands (ssDNA). The leading ssDNA polymer is the template for DNA polymerase III holoenzyme which synthesizes a continuous strand.. The enzyme catalyses ATP + H2O = ADP + phosphate + H(+). Its activity is regulated as follows. Helicase activity on forked substrates is stimulated by replication protein A complex heterotrimer (RPA1, RPA2, RPA3). Helicase activity on G-quadruplex DNA is stimulated 3-fold by RPA, and inhibited by MSH2/MSH6. Unwinding of G-quadruplex DNA is inhibited by ATP-gamma-S and telomestatin (TMS); TMA does not inhibit unwinding of forked-duplex DNA. Helicase activity on dsDNA and G-quadruplex DNA is inhibited by porphyrin derivatives meso-tetra (N-methyl-4-pyridyl) porphine tetra tosylate (T4) and N-methyl mesoporphyrin IX (NMM). DNA-dependent ATPase and 5'-3' DNA helicase required for the maintenance of chromosomal stability. Acts late in the Fanconi anemia pathway, after FANCD2 ubiquitination. Involved in the repair of DNA double-strand breaks by homologous recombination in a manner that depends on its association with BRCA1. Involved in the repair of abasic sites at replication forks by promoting the degradation of DNA-protein cross-links: acts by catalyzing unfolding of HMCES DNA-protein cross-link via its helicase activity, exposing the underlying DNA and enabling cleavage of the DNA-protein adduct by the SPRTN metalloprotease. Can unwind RNA:DNA substrates. Unwinds G-quadruplex DNA; unwinding requires a 5'-single stranded tail. The polypeptide is Fanconi anemia group J protein (Homo sapiens (Human)).